We begin with the raw amino-acid sequence, 317 residues long: Melanocyte-stimulating hormone receptor (317 aa).

At 1-37 (MAVQGSQRRLLGSLNSTPTAIPQLGLAANQTGARCLE) the chain is on the extracellular side. Asn-29 carries an N-linked (GlcNAc...) asparagine glycan. Residues 38–63 (VSIPDGLFLSLGLVSLVENMLVVATI) form a helical membrane-spanning segment. The Cytoplasmic segment spans residues 64 to 72 (AKNRNLHSP). The helical transmembrane segment at 73–93 (MYCFICCLALSDLLVSGSNVL) threads the bilayer. Residues 94–118 (ETAVILLLEAGALVARAAVLQQVDN) are Extracellular-facing. The helical transmembrane segment at 119-140 (VIDVITCSSMLSSLCFLGAIAV) threads the bilayer. Residues 141-163 (DRYISIFYALRYHSIVTLPRARR) are Cytoplasmic-facing. A helical membrane pass occupies residues 164–183 (AIAAIWVASVLFSTLFIAYC). The Extracellular portion of the chain corresponds to 184 to 191 (DHTAVLLC). A helical transmembrane segment spans residues 192-211 (LVVFFLAVLVLMAVLYVHML). At 212–240 (ARACQHAQGIARLHKRQRPVHQGFGLKGA) the chain is on the cytoplasmic side. A helical transmembrane segment spans residues 241-266 (VTLTILLGIFFLCWGPFFLHLTLIVL). Residues 267-279 (CPEHPTCGCIFKN) lie on the Extracellular side of the membrane. A helical membrane pass occupies residues 280 to 300 (FNLFLALIICNAIIDPLIYAF). Topologically, residues 301-317 (HSQELRRTLKEVLTCSW) are cytoplasmic. Cys-315 carries S-palmitoyl cysteine lipidation.

This sequence belongs to the G-protein coupled receptor 1 family. Interacts with MGRN1, but does not undergo MGRN1-mediated ubiquitination; this interaction competes with GNAS-binding and thus inhibits agonist-induced cAMP production. Interacts with OPN3; the interaction results in a decrease in MC1R-mediated cAMP signaling and ultimately a decrease in melanin production in melanocytes.

It is found in the cell membrane. Its function is as follows. Receptor for MSH (alpha, beta and gamma) and ACTH. The activity of this receptor is mediated by G proteins which activate adenylate cyclase. Mediates melanogenesis, the production of eumelanin (black/brown) and phaeomelanin (red/yellow), via regulation of cAMP signaling in melanocytes. In Pan troglodytes (Chimpanzee), this protein is Melanocyte-stimulating hormone receptor (MC1R).